Reading from the N-terminus, the 223-residue chain is Crossover junction endodeoxyribonuclease RuvC (223 aa).

Residues Asp12, Glu73, and Asp146 contribute to the active site. Mg(2+) is bound by residues Asp12, Glu73, and Asp146. Positions 182–223 (QGKLGKAKSTLNARNNAQVTGDAQVRAGHPSQFERPDRADPR) are disordered. Positions 190-202 (STLNARNNAQVTG) are enriched in polar residues. Residues 213–223 (QFERPDRADPR) are compositionally biased toward basic and acidic residues.

Belongs to the RuvC family. Homodimer which binds Holliday junction (HJ) DNA. The HJ becomes 2-fold symmetrical on binding to RuvC with unstacked arms; it has a different conformation from HJ DNA in complex with RuvA. In the full resolvosome a probable DNA-RuvA(4)-RuvB(12)-RuvC(2) complex forms which resolves the HJ. It depends on Mg(2+) as a cofactor.

Its subcellular location is the cytoplasm. The enzyme catalyses Endonucleolytic cleavage at a junction such as a reciprocal single-stranded crossover between two homologous DNA duplexes (Holliday junction).. The RuvA-RuvB-RuvC complex processes Holliday junction (HJ) DNA during genetic recombination and DNA repair. Endonuclease that resolves HJ intermediates. Cleaves cruciform DNA by making single-stranded nicks across the HJ at symmetrical positions within the homologous arms, yielding a 5'-phosphate and a 3'-hydroxyl group; requires a central core of homology in the junction. The consensus cleavage sequence is 5'-(A/T)TT(C/G)-3'. Cleavage occurs on the 3'-side of the TT dinucleotide at the point of strand exchange. HJ branch migration catalyzed by RuvA-RuvB allows RuvC to scan DNA until it finds its consensus sequence, where it cleaves and resolves the cruciform DNA. This chain is Crossover junction endodeoxyribonuclease RuvC, found in Corynebacterium efficiens (strain DSM 44549 / YS-314 / AJ 12310 / JCM 11189 / NBRC 100395).